Here is a 280-residue protein sequence, read N- to C-terminus: Phosphonates import ATP-binding protein PhnC 1 (280 aa).

The ABC transporter domain occupies 3–247; that stretch reads FRLDAASVSY…LLRELYASES (245 aa). 36–43 lines the ATP pocket; sequence GPSGAGKT.

It belongs to the ABC transporter superfamily. Phosphonates importer (TC 3.A.1.9.1) family. As to quaternary structure, the complex is composed of two ATP-binding proteins (PhnC), two transmembrane proteins (PhnE) and a solute-binding protein (PhnD).

The protein localises to the cell inner membrane. The catalysed reaction is phosphonate(out) + ATP + H2O = phosphonate(in) + ADP + phosphate + H(+). Its function is as follows. Part of the ABC transporter complex PhnCDE involved in phosphonates import. Responsible for energy coupling to the transport system. In Cupriavidus necator (strain ATCC 17699 / DSM 428 / KCTC 22496 / NCIMB 10442 / H16 / Stanier 337) (Ralstonia eutropha), this protein is Phosphonates import ATP-binding protein PhnC 1.